The sequence spans 206 residues: Uridine kinase (206 aa).

An ATP-binding site is contributed by 9–16 (GGSGSGKT).

It belongs to the uridine kinase family.

The protein resides in the cytoplasm. It carries out the reaction uridine + ATP = UMP + ADP + H(+). The catalysed reaction is cytidine + ATP = CMP + ADP + H(+). The protein operates within pyrimidine metabolism; CTP biosynthesis via salvage pathway; CTP from cytidine: step 1/3. Its pathway is pyrimidine metabolism; UMP biosynthesis via salvage pathway; UMP from uridine: step 1/1. This chain is Uridine kinase, found in Borrelia hermsii (strain HS1 / DAH).